The sequence spans 322 residues: Pantothenate kinase (322 aa).

101–108 (GSVAVGKS) serves as a coordination point for ATP.

Belongs to the prokaryotic pantothenate kinase family.

It is found in the cytoplasm. The catalysed reaction is (R)-pantothenate + ATP = (R)-4'-phosphopantothenate + ADP + H(+). Its pathway is cofactor biosynthesis; coenzyme A biosynthesis; CoA from (R)-pantothenate: step 1/5. This is Pantothenate kinase from Psychromonas ingrahamii (strain DSM 17664 / CCUG 51855 / 37).